The following is a 343-amino-acid chain: Single-pass membrane and coiled-coil domain-containing protein 2 (343 aa).

Residues 86-99 (EHDQDLSKQDKQET) are compositionally biased toward basic and acidic residues. Residues 86–108 (EHDQDLSKQDKQETDVDEDPQAS) are disordered. The stretch at 152–238 (TEKIDNIIKK…SAKLRMYQME (87 aa)) forms a coiled coil. The helical transmembrane segment at 284–304 (IFIMFDVLTVTGLLCYILFFG) threads the bilayer.

Its subcellular location is the membrane. This chain is Single-pass membrane and coiled-coil domain-containing protein 2 (SMCO2), found in Homo sapiens (Human).